Here is a 700-residue protein sequence, read N- to C-terminus: Elongation factor G (700 aa).

Positions 10–286 (NKVRNIGIMA…AVIDYLPNPL (277 aa)) constitute a tr-type G domain. GTP-binding positions include 19-26 (AHIDAGKT), 83-87 (DTPGH), and 137-140 (NKMD).

This sequence belongs to the TRAFAC class translation factor GTPase superfamily. Classic translation factor GTPase family. EF-G/EF-2 subfamily.

The protein resides in the cytoplasm. Functionally, catalyzes the GTP-dependent ribosomal translocation step during translation elongation. During this step, the ribosome changes from the pre-translocational (PRE) to the post-translocational (POST) state as the newly formed A-site-bound peptidyl-tRNA and P-site-bound deacylated tRNA move to the P and E sites, respectively. Catalyzes the coordinated movement of the two tRNA molecules, the mRNA and conformational changes in the ribosome. In Rhodococcus jostii (strain RHA1), this protein is Elongation factor G.